The chain runs to 206 residues: Recombination protein RecR (206 aa).

The segment at 58 to 73 (CENCHNISDVAVCEIC) adopts a C4-type zinc-finger fold. One can recognise a Toprim domain in the interval 81 to 176 (QIVCVVEDVR…ITSSIARGIS (96 aa)).

This sequence belongs to the RecR family.

Its function is as follows. May play a role in DNA repair. It seems to be involved in an RecBC-independent recombinational process of DNA repair. It may act with RecF and RecO. This is Recombination protein RecR from Flavobacterium psychrophilum (strain ATCC 49511 / DSM 21280 / CIP 103535 / JIP02/86).